The sequence spans 426 residues: Glutamate-1-semialdehyde 2,1-aminomutase (426 aa).

Lys265 carries the post-translational modification N6-(pyridoxal phosphate)lysine.

The protein belongs to the class-III pyridoxal-phosphate-dependent aminotransferase family. HemL subfamily. In terms of assembly, homodimer. It depends on pyridoxal 5'-phosphate as a cofactor.

The protein resides in the cytoplasm. The catalysed reaction is (S)-4-amino-5-oxopentanoate = 5-aminolevulinate. Its pathway is porphyrin-containing compound metabolism; protoporphyrin-IX biosynthesis; 5-aminolevulinate from L-glutamyl-tRNA(Glu): step 2/2. This Escherichia coli O81 (strain ED1a) protein is Glutamate-1-semialdehyde 2,1-aminomutase.